We begin with the raw amino-acid sequence, 279 residues long: uncharacterized protein (279 aa).

Helical transmembrane passes span 1–21 (MGFIKSTLLATVTVFVGLCGI), 38–58 (FACHTFLAISSAYGVIASVVA), and 131–151 (SLRYVPILGWFMILSDVVFID).

Belongs to the 1-acyl-sn-glycerol-3-phosphate acyltransferase family.

The protein resides in the endoplasmic reticulum membrane. This is an uncharacterized protein from Schizosaccharomyces pombe (strain 972 / ATCC 24843) (Fission yeast).